The following is a 179-amino-acid chain: Large ribosomal subunit protein uL6 (179 aa).

Belongs to the universal ribosomal protein uL6 family. Part of the 50S ribosomal subunit.

Functionally, this protein binds to the 23S rRNA, and is important in its secondary structure. It is located near the subunit interface in the base of the L7/L12 stalk, and near the tRNA binding site of the peptidyltransferase center. The protein is Large ribosomal subunit protein uL6 of Persephonella marina (strain DSM 14350 / EX-H1).